Here is a 933-residue protein sequence, read N- to C-terminus: Phospholipase SGR2 (933 aa).

A compositionally biased stretch (basic and acidic residues) spans 1–14 (MEDRETHLGTREVN). The tract at residues 1 to 22 (MEDRETHLGTREVNETSPDLLK) is disordered. S444 is an active-site residue. Disordered regions lie at residues 475-517 (PDEE…GQDN) and 553-598 (RGGQ…ESVN). The span at 505-517 (QLNNPEKITGQDN) shows a compositional bias: polar residues. Over residues 553–563 (RGGQEDDHHDS) the composition is skewed to basic and acidic residues. Residues 593 to 631 (DKESVNSNNEERIKLLQDEVNSLRSKVAQLLSENARILS) are a coiled coil. The 200-residue stretch at 669-868 (LEFKVDTFFA…ALFIIKHLYR (200 aa)) folds into the DDHD domain. Positions 871–903 (PDGPNSPTESTEGDDSPKDSSRPHSWIDRREAD) are disordered. Residues 885-902 (DSPKDSSRPHSWIDRREA) show a composition bias toward basic and acidic residues.

Forms oligomers. As to expression, expressed in roots, hypocotyls, leaves, stems and floral buds, and, at low levels, in siliques.

It localises to the vacuole membrane. Its function is as follows. Involved in vacuolar formation or function (e.g. formation of vacuolar membrane 'bulbs'). Required for amyloplast sedimentation in the endodermis during shoot gravitropism, which are thus acting as statoliths. Particularly important for the negative gravitropism leading to leaf movement observed in darkness. This chain is Phospholipase SGR2 (SGR2), found in Arabidopsis thaliana (Mouse-ear cress).